Consider the following 676-residue polypeptide: Nicastrin (676 aa).

A signal peptide spans 1–28 (MAMGLIRLLSIAFTLVLLSILPLHLSLA). Residues 29-644 (DEITSIESVP…VYTVQHSAYD (616 aa)) lie on the Extracellular side of the membrane. 7 N-linked (GlcNAc...) asparagine glycosylation sites follow: Asn58, Asn336, Asn371, Asn444, Asn480, Asn555, and Asn611. A helical membrane pass occupies residues 645-665 (NAVLVAGITVTTLAYIGILAA). Residues 666–676 (KSIITKALKQD) are Cytoplasmic-facing.

Belongs to the nicastrin family. As to quaternary structure, probable component of the gamma-secretase complex, a complex composed of a presenilin homodimer, nicastrin, APH1 and PEN2.

It is found in the membrane. Its function is as follows. Probable subunit of the gamma-secretase complex, an endoprotease complex that catalyzes the intramembrane cleavage of integral membrane proteins such as Notch. The sequence is that of Nicastrin from Arabidopsis thaliana (Mouse-ear cress).